The following is a 393-amino-acid chain: MQQTKKLTHSDITIAVMSGPFLQRGEPALVSKWYRTKMALACGVDLVVELPYAFSTQKAETFANGAISILNALHVSEICFGSEDGQIENFYNTISVQKNEEETFNRLVKQFMNAGNSYAKATSEAFLHILSSEKNIDMSQPNNILGFQYIKAILMQNSSMQAQTIKRFASHYHDETFNDQHIASATSIRKQLFSENSSFTEIESFIPKATASLLASYKQNYGTLHNWEQYFSFFKYKLMTMSPEDLRHIYEIEEGLEHRILSKIQTSSSFHSFMESLKTKRYTWTRLQRACTHILTNTTKEEIYCANIEQHAPYIRLLGMSQKGQTYLSKNKKKIELPILTHTKTFDHPTLHIERKANSVYFSIMKEPLRTQLLKRDATHHPIRYDETTAKFL.

Residues Gly-81, Asn-142, and Arg-167 each coordinate ATP.

Belongs to the TmcAL family.

It localises to the cytoplasm. The catalysed reaction is cytidine(34) in elongator tRNA(Met) + acetate + ATP = N(4)-acetylcytidine(34) in elongator tRNA(Met) + AMP + diphosphate. Its function is as follows. Catalyzes the formation of N(4)-acetylcytidine (ac(4)C) at the wobble position of elongator tRNA(Met), using acetate and ATP as substrates. First activates an acetate ion to form acetyladenylate (Ac-AMP) and then transfers the acetyl group to tRNA to form ac(4)C34. The sequence is that of tRNA(Met) cytidine acetate ligase from Bacillus thuringiensis subsp. konkukian (strain 97-27).